Here is a 53-residue protein sequence, read N- to C-terminus: UPF0391 membrane protein BamMC406_6344 (53 aa).

2 helical membrane passes run 5–25 (AIIF…GIAA) and 30–50 (IAKI…LLGV).

The protein belongs to the UPF0391 family.

Its subcellular location is the cell membrane. This chain is UPF0391 membrane protein BamMC406_6344, found in Burkholderia ambifaria (strain MC40-6).